A 478-amino-acid chain; its full sequence is BUB3-interacting and GLEBS motif-containing protein ZNF207 (478 aa).

The tract at residues 1-92 (MGRKKKKQLK…EGIPEKDMDE (92 aa)) is microtubule-binding region. 2 C2H2-type zinc fingers span residues 11–34 (PWCW…KAKH) and 35–58 (FKCH…MQVH). The segment covering 99–111 (QKTQESQKKKQQD) has biased composition (basic and acidic residues). Disordered regions lie at residues 99 to 157 (QKTQ…PGMP), 238 to 276 (APTA…SNSE), 300 to 362 (VGTD…ATSK), and 384 to 478 (RNLP…GGRY). Over residues 112 to 121 (DSDEYDDDDS) the composition is skewed to acidic residues. The span at 127–136 (FQPQPVQPQQ) shows a compositional bias: polar residues. Pro residues predominate over residues 142–157 (MAQPGLPPVPGAPGMP). Low complexity-rich tracts occupy residues 267-276 (SSSTASSNSE), 310-362 (TPAT…ATSK), and 433-446 (QGMP…MPPY). Residues 359–391 (ATSKLIHPDEDISLEERRAQLPKYQRNLPRPGQ) are GLEBS. Positions 447–467 (GQGPPMVPPYQGGPPRPPMGM) are enriched in pro residues.

In terms of assembly, interacts (via GLEBS region) with BUB3. Ubiquitous.

The protein localises to the nucleus. The protein resides in the chromosome. It localises to the centromere. Its subcellular location is the kinetochore. It is found in the cytoplasm. The protein localises to the cytoskeleton. The protein resides in the spindle. In terms of biological role, kinetochore- and microtubule-binding protein that plays a key role in spindle assembly. ZNF207/BuGZ is mainly composed of disordered low-complexity regions and undergoes phase transition or coacervation to form temperature-dependent liquid droplets. Coacervation promotes microtubule bundling and concentrates tubulin, promoting microtubule polymerization and assembly of spindle and spindle matrix by concentrating its building blocks. Also acts as a regulator of mitotic chromosome alignment by mediating the stability and kinetochore loading of BUB3. Mechanisms by which BUB3 is protected are unclear: according to a first report, ZNF207/BuGZ may act by blocking ubiquitination and proteasomal degradation of BUB3. According to another report, the stabilization is independent of the proteasome. The polypeptide is BUB3-interacting and GLEBS motif-containing protein ZNF207 (Homo sapiens (Human)).